The sequence spans 344 residues: Dihydroorotase (344 aa).

2 residues coordinate Zn(2+): H13 and H15. Substrate-binding positions include 15–17 (HFR) and N41. Residues K98, H135, and H173 each contribute to the Zn(2+) site. K98 carries the N6-carboxylysine modification. Position 135 (H135) interacts with substrate. Position 218 (L218) interacts with substrate. Residue D246 participates in Zn(2+) binding. The active site involves D246. Residues H250 and A262 each coordinate substrate.

This sequence belongs to the metallo-dependent hydrolases superfamily. DHOase family. Class II DHOase subfamily. As to quaternary structure, homodimer. Requires Zn(2+) as cofactor.

The catalysed reaction is (S)-dihydroorotate + H2O = N-carbamoyl-L-aspartate + H(+). It functions in the pathway pyrimidine metabolism; UMP biosynthesis via de novo pathway; (S)-dihydroorotate from bicarbonate: step 3/3. Catalyzes the reversible cyclization of carbamoyl aspartate to dihydroorotate. The chain is Dihydroorotase from Shewanella woodyi (strain ATCC 51908 / MS32).